Consider the following 946-residue polypeptide: Bifunctional glutamine synthetase adenylyltransferase/adenylyl-removing enzyme (946 aa).

Positions methionine 1–glutamate 440 are adenylyl removase. The adenylyl transferase stretch occupies residues serine 449–glutamate 946.

The protein belongs to the GlnE family. It depends on Mg(2+) as a cofactor.

It carries out the reaction [glutamine synthetase]-O(4)-(5'-adenylyl)-L-tyrosine + phosphate = [glutamine synthetase]-L-tyrosine + ADP. It catalyses the reaction [glutamine synthetase]-L-tyrosine + ATP = [glutamine synthetase]-O(4)-(5'-adenylyl)-L-tyrosine + diphosphate. In terms of biological role, involved in the regulation of glutamine synthetase GlnA, a key enzyme in the process to assimilate ammonia. When cellular nitrogen levels are high, the C-terminal adenylyl transferase (AT) inactivates GlnA by covalent transfer of an adenylyl group from ATP to specific tyrosine residue of GlnA, thus reducing its activity. Conversely, when nitrogen levels are low, the N-terminal adenylyl removase (AR) activates GlnA by removing the adenylyl group by phosphorolysis, increasing its activity. The regulatory region of GlnE binds the signal transduction protein PII (GlnB) which indicates the nitrogen status of the cell. In Escherichia coli O45:K1 (strain S88 / ExPEC), this protein is Bifunctional glutamine synthetase adenylyltransferase/adenylyl-removing enzyme.